Here is a 297-residue protein sequence, read N- to C-terminus: Nitrogenase iron protein (297 aa).

11 to 18 is an ATP binding site; sequence GKGGIGKS. Cysteine 99 contacts [4Fe-4S] cluster. An ADP-ribosylarginine; by dinitrogenase reductase ADP-ribosyltransferase modification is found at arginine 102. Cysteine 133 is a [4Fe-4S] cluster binding site.

The protein belongs to the NifH/BchL/ChlL family. In terms of assembly, homodimer. The cofactor is [4Fe-4S] cluster. Post-translationally, the reversible ADP-ribosylation of Arg-102 inactivates the nitrogenase reductase and regulates nitrogenase activity.

The enzyme catalyses N2 + 8 reduced [2Fe-2S]-[ferredoxin] + 16 ATP + 16 H2O = H2 + 8 oxidized [2Fe-2S]-[ferredoxin] + 2 NH4(+) + 16 ADP + 16 phosphate + 6 H(+). Its function is as follows. The key enzymatic reactions in nitrogen fixation are catalyzed by the nitrogenase complex, which has 2 components: the iron protein and the molybdenum-iron protein. The polypeptide is Nitrogenase iron protein (Mesorhizobium japonicum (strain LMG 29417 / CECT 9101 / MAFF 303099) (Mesorhizobium loti (strain MAFF 303099))).